We begin with the raw amino-acid sequence, 376 residues long: Queuine tRNA-ribosyltransferase (376 aa).

Residue Asp89 is the Proton acceptor of the active site. Substrate is bound by residues 89–93 (DSGGF), Asp143, Gln194, and Gly221. Positions 252 to 258 (GVGLPSN) are RNA binding. Asp271 (nucleophile) is an active-site residue. Residues 276–280 (ARNGR) form an RNA binding; important for wobble base 34 recognition region. Residues Cys309, Cys311, Cys314, and His340 each contribute to the Zn(2+) site.

Belongs to the queuine tRNA-ribosyltransferase family. In terms of assembly, homodimer. Within each dimer, one monomer is responsible for RNA recognition and catalysis, while the other monomer binds to the replacement base PreQ1. The cofactor is Zn(2+).

The enzyme catalyses 7-aminomethyl-7-carbaguanine + guanosine(34) in tRNA = 7-aminomethyl-7-carbaguanosine(34) in tRNA + guanine. Its pathway is tRNA modification; tRNA-queuosine biosynthesis. Its function is as follows. Catalyzes the base-exchange of a guanine (G) residue with the queuine precursor 7-aminomethyl-7-deazaguanine (PreQ1) at position 34 (anticodon wobble position) in tRNAs with GU(N) anticodons (tRNA-Asp, -Asn, -His and -Tyr). Catalysis occurs through a double-displacement mechanism. The nucleophile active site attacks the C1' of nucleotide 34 to detach the guanine base from the RNA, forming a covalent enzyme-RNA intermediate. The proton acceptor active site deprotonates the incoming PreQ1, allowing a nucleophilic attack on the C1' of the ribose to form the product. After dissociation, two additional enzymatic reactions on the tRNA convert PreQ1 to queuine (Q), resulting in the hypermodified nucleoside queuosine (7-(((4,5-cis-dihydroxy-2-cyclopenten-1-yl)amino)methyl)-7-deazaguanosine). This is Queuine tRNA-ribosyltransferase from Clostridium tetani (strain Massachusetts / E88).